A 503-amino-acid chain; its full sequence is Cytochrome P450 6l1 (503 aa).

Position 438 (C438) interacts with heme.

Belongs to the cytochrome P450 family. Requires heme as cofactor. Detected only in testes and accessory glands of male adults.

The protein resides in the endoplasmic reticulum membrane. Its subcellular location is the microsome membrane. The sequence is that of Cytochrome P450 6l1 (CYP6L1) from Blattella germanica (German cockroach).